Here is a 217-residue protein sequence, read N- to C-terminus: Small ribosomal subunit protein uS3 (217 aa).

Positions 38 to 106 constitute a KH type-2 domain; it reads IRKFVQKELA…QVHINIIEIK (69 aa).

The protein belongs to the universal ribosomal protein uS3 family. As to quaternary structure, part of the 30S ribosomal subunit. Forms a tight complex with proteins S10 and S14.

Functionally, binds the lower part of the 30S subunit head. Binds mRNA in the 70S ribosome, positioning it for translation. The sequence is that of Small ribosomal subunit protein uS3 from Streptococcus pneumoniae serotype 19F (strain G54).